The primary structure comprises 230 residues: 3,4-dihydroxy-2-butanone 4-phosphate synthase (230 aa).

D-ribulose 5-phosphate contacts are provided by residues 38–39, Asp43, 151–155, and Glu175; these read RE and RRGHT. Glu39 serves as a coordination point for Mg(2+). His154 serves as a coordination point for Mg(2+).

The protein belongs to the DHBP synthase family. In terms of assembly, homodimer. The cofactor is Mg(2+). It depends on Mn(2+) as a cofactor.

The enzyme catalyses D-ribulose 5-phosphate = (2S)-2-hydroxy-3-oxobutyl phosphate + formate + H(+). The protein operates within cofactor biosynthesis; riboflavin biosynthesis; 2-hydroxy-3-oxobutyl phosphate from D-ribulose 5-phosphate: step 1/1. Its function is as follows. Catalyzes the conversion of D-ribulose 5-phosphate to formate and 3,4-dihydroxy-2-butanone 4-phosphate. This chain is 3,4-dihydroxy-2-butanone 4-phosphate synthase, found in Vibrio harveyi (Beneckea harveyi).